The following is a 109-amino-acid chain: Hainantoxin-XVIII-7 (109 aa).

A signal peptide spans 1–18 (MKLSIIIIATSLVIAVVA). Residues 19–46 (FPSKDSKAIENDKTEQRMEIVVQETARA) constitute a propeptide that is removed on maturation. 4 disulfide bridges follow: Cys-47/Cys-62, Cys-55/Cys-68, Cys-59/Cys-108, and Cys-61/Cys-81.

It belongs to the neurotoxin 25 family. F7 subfamily. In terms of tissue distribution, expressed by the venom gland.

The protein resides in the secreted. Functionally, putative ion channel inhibitor. The sequence is that of Hainantoxin-XVIII-7 from Cyriopagopus hainanus (Chinese bird spider).